A 248-amino-acid polypeptide reads, in one-letter code: 1-(5-phosphoribosyl)-5-[(5-phosphoribosylamino)methylideneamino] imidazole-4-carboxamide isomerase (248 aa).

The active-site Proton acceptor is the Asp-7. Asp-131 serves as the catalytic Proton donor.

This sequence belongs to the HisA/HisF family.

Its subcellular location is the cytoplasm. It carries out the reaction 1-(5-phospho-beta-D-ribosyl)-5-[(5-phospho-beta-D-ribosylamino)methylideneamino]imidazole-4-carboxamide = 5-[(5-phospho-1-deoxy-D-ribulos-1-ylimino)methylamino]-1-(5-phospho-beta-D-ribosyl)imidazole-4-carboxamide. The protein operates within amino-acid biosynthesis; L-histidine biosynthesis; L-histidine from 5-phospho-alpha-D-ribose 1-diphosphate: step 4/9. The protein is 1-(5-phosphoribosyl)-5-[(5-phosphoribosylamino)methylideneamino] imidazole-4-carboxamide isomerase of Baumannia cicadellinicola subsp. Homalodisca coagulata.